The primary structure comprises 345 residues: NADH-quinone oxidoreductase subunit H (345 aa).

8 consecutive transmembrane segments (helical) span residues 13–33, 84–104, 115–135, 161–181, 190–210, 248–268, 278–298, and 309–329; these read VLII…LLFL, FMLA…VIPF, VAIL…IMGG, IGLI…SAIV, FFSW…ISAL, YIAI…GWLS, IWMV…KAIV, and LGWK…AFAA.

The protein belongs to the complex I subunit 1 family. NDH-1 is composed of 14 different subunits. Subunits NuoA, H, J, K, L, M, N constitute the membrane sector of the complex.

It is found in the cell inner membrane. The enzyme catalyses a quinone + NADH + 5 H(+)(in) = a quinol + NAD(+) + 4 H(+)(out). NDH-1 shuttles electrons from NADH, via FMN and iron-sulfur (Fe-S) centers, to quinones in the respiratory chain. The immediate electron acceptor for the enzyme in this species is believed to be ubiquinone. Couples the redox reaction to proton translocation (for every two electrons transferred, four hydrogen ions are translocated across the cytoplasmic membrane), and thus conserves the redox energy in a proton gradient. This subunit may bind ubiquinone. In Dinoroseobacter shibae (strain DSM 16493 / NCIMB 14021 / DFL 12), this protein is NADH-quinone oxidoreductase subunit H.